Here is a 408-residue protein sequence, read N- to C-terminus: Potassium channel subfamily K member 13 (408 aa).

At 1-19 (MAGRGFSWGPGHLNEDNAR) the chain is on the cytoplasmic side. The chain crosses the membrane as a helical span at residues 20-40 (FLLLAALIVLYLLGGAAVFSA). Residues asparagine 59 and asparagine 65 are each glycosylated (N-linked (GlcNAc...) asparagine). The segment at residues 95 to 115 (WDFTGAFYFVGTVVSTIGFGM) is an intramembrane region (pore-forming). Residues threonine 110, isoleucine 111, and glycine 112 each coordinate K(+). Residues 110–115 (TIGFGM) form a selectivity filter 1 region. Residues 125-145 (IFLIFYGLVGCSSTILFFNLF) form a helical membrane-spanning segment. The Cytoplasmic portion of the chain corresponds to 146 to 193 (LERLITIIAYIMKSCHQRQLRRRGALPQESLKDAGQCEVDSLAGWKPS). Residues 194-214 (VYYVMLILCTASILISCCASA) traverse the membrane as a helical segment. The segment at residues 224-244 (YFDSLYFCFVAFSTIGFGDLV) is an intramembrane region (pore-forming). Threonine 237, isoleucine 238, glycine 239, and phenylalanine 240 together coordinate K(+). Residues 237-242 (TIGFGD) are selectivity filter 2. Residues 263-283 (VFILMGVCCIYSLFNVISILI) traverse the membrane as a helical segment. Residues 284–408 (KQSLNWILRK…NRLAETSGDR (125 aa)) lie on the Cytoplasmic side of the membrane.

This sequence belongs to the two pore domain potassium channel (TC 1.A.1.8) family. As to quaternary structure, homodimer. Heterodimer with KCNK12. Expressed in microglia (at protein level).

Its subcellular location is the cell membrane. It catalyses the reaction K(+)(in) = K(+)(out). With respect to regulation, the channel conductance is activated by arachidonic acid and inhibited by Ba(2+) ions, volatile anesthetics such as halothane and antiarrhythmic drugs mexiletine and lidocaine. Insensitive to extracellular pH change. K(+) channel that conducts outward rectifying tonic currents potentiated by purinergic signals. Homo- and heterodimerizes to form functional channels with distinct regulatory and gating properties. Contributes most of K(+) currents at the plasma membrane of resting microglia. Maintains a depolarized membrane potential required for proper ramified microglia morphology and phagocytosis, selectively mediating microglial pruning of presynaptic compartments at hippocampal excitatory synapses. Upon local release of ATP caused by neuronal injury or infection, it is potentiated by P2RY12 and P2RX7 receptor signaling and contributes to ATP-triggered K(+) efflux underlying microglial NLRP3 inflammasome assembly and IL1B release. In Homo sapiens (Human), this protein is Potassium channel subfamily K member 13.